Consider the following 253-residue polypeptide: 5'/3'-nucleotidase SurE (253 aa).

Positions 8, 9, 39, and 92 each coordinate a divalent metal cation.

Belongs to the SurE nucleotidase family. The cofactor is a divalent metal cation.

It localises to the cytoplasm. It carries out the reaction a ribonucleoside 5'-phosphate + H2O = a ribonucleoside + phosphate. The enzyme catalyses a ribonucleoside 3'-phosphate + H2O = a ribonucleoside + phosphate. It catalyses the reaction [phosphate](n) + H2O = [phosphate](n-1) + phosphate + H(+). Its function is as follows. Nucleotidase with a broad substrate specificity as it can dephosphorylate various ribo- and deoxyribonucleoside 5'-monophosphates and ribonucleoside 3'-monophosphates with highest affinity to 3'-AMP. Also hydrolyzes polyphosphate (exopolyphosphatase activity) with the preference for short-chain-length substrates (P20-25). Might be involved in the regulation of dNTP and NTP pools, and in the turnover of 3'-mononucleotides produced by numerous intracellular RNases (T1, T2, and F) during the degradation of various RNAs. This chain is 5'/3'-nucleotidase SurE, found in Escherichia fergusonii (strain ATCC 35469 / DSM 13698 / CCUG 18766 / IAM 14443 / JCM 21226 / LMG 7866 / NBRC 102419 / NCTC 12128 / CDC 0568-73).